Consider the following 334-residue polypeptide: Methionine import ATP-binding protein MetN (334 aa).

The 240-residue stretch at Val7–Val246 folds into the ABC transporter domain. Position 43 to 50 (Gly43 to Ser50) interacts with ATP.

It belongs to the ABC transporter superfamily. Methionine importer (TC 3.A.1.24) family. The complex is composed of two ATP-binding proteins (MetN), two transmembrane proteins (MetI) and a solute-binding protein (MetQ).

It localises to the cell membrane. It catalyses the reaction L-methionine(out) + ATP + H2O = L-methionine(in) + ADP + phosphate + H(+). The enzyme catalyses D-methionine(out) + ATP + H2O = D-methionine(in) + ADP + phosphate + H(+). Functionally, part of the ABC transporter complex MetNIQ involved in methionine import. Responsible for energy coupling to the transport system. In Nocardia farcinica (strain IFM 10152), this protein is Methionine import ATP-binding protein MetN.